Reading from the N-terminus, the 357-residue chain is MIIKNTGTSTFIWLPVYFYNEPLNLKLVISIFELLSYILCGYILNLSIYVMSKIQLFHKNLMFLTVPLFAIWYELIIGKFITIAYRLKIVNPGVELGEHTVFWTNDPDKILEVGGSSGLELLIFGGFLQWHTIYSIVFGILAVATERTIASVYIKDYESKKRIWIPIFLIIICQVLAIFMTFIVINRKVHPIIARLPFIFLCPISFAVWLFVKNKNKTLQKEIQNPKRTRIFTLSQQCQVKENLRALRLGTRLVAVVLVYIMVCFLGIVSLTFDLIPGVCGHFVENFLFFHPIPICLTAMFSIPRWKTEFEKSYLPWKYRRNLRKIRQMSMEIEEDSIKKISLETDLYFKQLAESWI.

7 helical membrane-spanning segments follow: residues 28-48 (VISI…NLSI), 61-81 (LMFL…GKFI), 121-141 (LLIF…FGIL), 165-185 (IPIF…FIVI), 192-212 (IIAR…WLFV), 253-273 (LVAV…SLTF), and 283-303 (FVEN…MFSI).

Belongs to the nematode receptor-like protein sre family.

The protein resides in the membrane. The chain is Serpentine receptor class epsilon-31 (sre-31) from Caenorhabditis elegans.